We begin with the raw amino-acid sequence, 535 residues long: Dimethylaniline monooxygenase [N-oxide-forming] 2 (535 aa).

FAD-binding positions include 9-13, E32, 40-41, and 61-62; these read GAGVS, LW, and NT. NADP(+) is bound by residues 60-61 and 195-198; these read TN and SAAD. A Glycyl lysine isopeptide (Lys-Gly) (interchain with G-Cter in SUMO) cross-link involves residue K492. A helical transmembrane segment spans residues 510–530; the sequence is APVSFLIKVLGLLAIVLAFFF.

This sequence belongs to the FMO family. The cofactor is FAD. It depends on Mg(2+) as a cofactor.

It localises to the microsome membrane. It is found in the endoplasmic reticulum membrane. In terms of biological role, catalyzes the oxidative metabolism of numerous xenobiotics, including mainly therapeutic drugs and insecticides that contain a soft nucleophile, most commonly nitrogen and sulfur and participates to their bioactivation. This chain is Dimethylaniline monooxygenase [N-oxide-forming] 2, found in Rattus norvegicus (Rat).